A 59-amino-acid polypeptide reads, in one-letter code: UPF0391 membrane protein lpp2589 (59 aa).

2 consecutive transmembrane segments (helical) span residues A5–V25 and I30–L50.

The protein belongs to the UPF0391 family.

Its subcellular location is the cell membrane. This is UPF0391 membrane protein lpp2589 from Legionella pneumophila (strain Paris).